A 222-amino-acid polypeptide reads, in one-letter code: Octanoyltransferase (222 aa).

The BPL/LPL catalytic domain occupies 35–210 (ETTPDELWLV…EFVHLLGYPK (176 aa)). Substrate contacts are provided by residues 74-81 (RGGQVTYH), 141-143 (SLG), and 154-156 (GLA). C172 functions as the Acyl-thioester intermediate in the catalytic mechanism.

It belongs to the LipB family.

The protein resides in the cytoplasm. The enzyme catalyses octanoyl-[ACP] + L-lysyl-[protein] = N(6)-octanoyl-L-lysyl-[protein] + holo-[ACP] + H(+). It functions in the pathway protein modification; protein lipoylation via endogenous pathway; protein N(6)-(lipoyl)lysine from octanoyl-[acyl-carrier-protein]: step 1/2. Its function is as follows. Catalyzes the transfer of endogenously produced octanoic acid from octanoyl-acyl-carrier-protein onto the lipoyl domains of lipoate-dependent enzymes. Lipoyl-ACP can also act as a substrate although octanoyl-ACP is likely to be the physiological substrate. This is Octanoyltransferase from Serratia proteamaculans (strain 568).